The primary structure comprises 159 residues: Protransforming growth factor alpha (159 aa).

Residues 1–23 (MVPATGQLALLALGILLAVCQAL) form the signal peptide. Positions 24-38 (ENSTSPLSDSPVAAA) are cleaved as a propeptide — removed in mature form. Residues 24–97 (ENSTSPLSDS…AVVAASQKKQ (74 aa)) are Extracellular-facing. An N-linked (GlcNAc...) asparagine glycan is attached at Asn-25. One can recognise an EGF-like domain in the interval 44 to 83 (NKCPDSHTQYCFHGTCRFLVQEEKPACVCHSGYVGVRCEH). Cystine bridges form between Cys-46-Cys-59, Cys-54-Cys-70, and Cys-72-Cys-81. A propeptide spans 89–159 (VVAASQKKQA…TACCHSETVV (71 aa)) (removed in mature form). A helical membrane pass occupies residues 98-123 (AITALVVVSIVALAVLIITCVLIHCC). Residues 124-159 (QLRKHCEWCRALVCRHEKPSALLKGRTACCHSETVV) lie on the Cytoplasmic side of the membrane. 2 S-palmitoyl cysteine lipidation sites follow: Cys-152 and Cys-153.

In terms of assembly, interacts with the PDZ domains of SDCBP and SNTA1. The interaction with SDCBP, is required for the targeting to the cell surface. In the endoplasmic reticulum, in its immature form (i.e. with a prosegment and lacking full N-glycosylation), interacts with CNIH. In the Golgi apparatus, may form a complex with CNIH and GORASP2. Interacts (via cytoplasmic C-terminal domain) with NKD2. Interacts with MAGI3.

Its subcellular location is the secreted. The protein resides in the extracellular space. The protein localises to the cell membrane. In terms of biological role, TGF alpha is a mitogenic polypeptide that is able to bind to the EGF receptor/EGFR and to act synergistically with TGF beta to promote anchorage-independent cell proliferation in soft agar. This is Protransforming growth factor alpha (Tgfa) from Mus musculus (Mouse).